Consider the following 533-residue polypeptide: Peptide chain release factor 3 (533 aa).

One can recognise a tr-type G domain in the interval 9-284 (ARRRTFAIIS…ALCELSPPPL (276 aa)). GTP-binding positions include 18–25 (SHPDAGKT), 95–99 (DTPGH), and 149–152 (NKLD).

This sequence belongs to the TRAFAC class translation factor GTPase superfamily. Classic translation factor GTPase family. PrfC subfamily.

It is found in the cytoplasm. Its function is as follows. Increases the formation of ribosomal termination complexes and stimulates activities of RF-1 and RF-2. It binds guanine nucleotides and has strong preference for UGA stop codons. It may interact directly with the ribosome. The stimulation of RF-1 and RF-2 is significantly reduced by GTP and GDP, but not by GMP. This Cupriavidus necator (strain ATCC 17699 / DSM 428 / KCTC 22496 / NCIMB 10442 / H16 / Stanier 337) (Ralstonia eutropha) protein is Peptide chain release factor 3.